We begin with the raw amino-acid sequence, 338 residues long: Ketol-acid reductoisomerase (NADP(+)) (338 aa).

Positions 1–181 (MKIYYDKDCN…GGGRAGIIET (181 aa)) constitute a KARI N-terminal Rossmann domain. Residues 24–27 (YGSQ), Arg-47, Ser-50, Ser-52, and 82–85 (DETQ) contribute to the NADP(+) site. His-107 is an active-site residue. Residue Gly-133 participates in NADP(+) binding. The 146-residue stretch at 182–327 (SFKEETETDL…ARLRSMMSWI (146 aa)) folds into the KARI C-terminal knotted domain. Residues Asp-190, Glu-194, Glu-226, and Glu-230 each contribute to the Mg(2+) site. Ser-251 contacts substrate.

The protein belongs to the ketol-acid reductoisomerase family. Requires Mg(2+) as cofactor.

It carries out the reaction (2R)-2,3-dihydroxy-3-methylbutanoate + NADP(+) = (2S)-2-acetolactate + NADPH + H(+). The catalysed reaction is (2R,3R)-2,3-dihydroxy-3-methylpentanoate + NADP(+) = (S)-2-ethyl-2-hydroxy-3-oxobutanoate + NADPH + H(+). The protein operates within amino-acid biosynthesis; L-isoleucine biosynthesis; L-isoleucine from 2-oxobutanoate: step 2/4. It functions in the pathway amino-acid biosynthesis; L-valine biosynthesis; L-valine from pyruvate: step 2/4. Involved in the biosynthesis of branched-chain amino acids (BCAA). Catalyzes an alkyl-migration followed by a ketol-acid reduction of (S)-2-acetolactate (S2AL) to yield (R)-2,3-dihydroxy-isovalerate. In the isomerase reaction, S2AL is rearranged via a Mg-dependent methyl migration to produce 3-hydroxy-3-methyl-2-ketobutyrate (HMKB). In the reductase reaction, this 2-ketoacid undergoes a metal-dependent reduction by NADPH to yield (R)-2,3-dihydroxy-isovalerate. The sequence is that of Ketol-acid reductoisomerase (NADP(+)) from Geobacter metallireducens (strain ATCC 53774 / DSM 7210 / GS-15).